The sequence spans 287 residues: Acetyl-coenzyme A carboxylase carboxyl transferase subunit beta (287 aa).

The CoA carboxyltransferase N-terminal domain maps to 25-287; that stretch reads IWTKCSGCVQ…KLTQQSFSEK (263 aa). Residues cysteine 29, cysteine 32, cysteine 48, and cysteine 51 each contribute to the Zn(2+) site. A C4-type zinc finger spans residues 29–51; the sequence is CSGCVQLLYTKELERNLQVCPKC.

The protein belongs to the AccD/PCCB family. In terms of assembly, acetyl-CoA carboxylase is a heterohexamer composed of biotin carboxyl carrier protein (AccB), biotin carboxylase (AccC) and two subunits each of ACCase subunit alpha (AccA) and ACCase subunit beta (AccD). Zn(2+) is required as a cofactor.

The protein resides in the cytoplasm. It carries out the reaction N(6)-carboxybiotinyl-L-lysyl-[protein] + acetyl-CoA = N(6)-biotinyl-L-lysyl-[protein] + malonyl-CoA. It functions in the pathway lipid metabolism; malonyl-CoA biosynthesis; malonyl-CoA from acetyl-CoA: step 1/1. Functionally, component of the acetyl coenzyme A carboxylase (ACC) complex. Biotin carboxylase (BC) catalyzes the carboxylation of biotin on its carrier protein (BCCP) and then the CO(2) group is transferred by the transcarboxylase to acetyl-CoA to form malonyl-CoA. The sequence is that of Acetyl-coenzyme A carboxylase carboxyl transferase subunit beta from Blochmanniella floridana.